Here is a 169-residue protein sequence, read N- to C-terminus: S-ribosylhomocysteine lyase (169 aa).

Fe cation-binding residues include histidine 54, histidine 58, and cysteine 128.

This sequence belongs to the LuxS family. As to quaternary structure, homodimer. Fe cation is required as a cofactor.

It carries out the reaction S-(5-deoxy-D-ribos-5-yl)-L-homocysteine = (S)-4,5-dihydroxypentane-2,3-dione + L-homocysteine. Its function is as follows. Involved in the synthesis of autoinducer 2 (AI-2) which is secreted by bacteria and is used to communicate both the cell density and the metabolic potential of the environment. The regulation of gene expression in response to changes in cell density is called quorum sensing. Catalyzes the transformation of S-ribosylhomocysteine (RHC) to homocysteine (HC) and 4,5-dihydroxy-2,3-pentadione (DPD). This Shewanella frigidimarina (strain NCIMB 400) protein is S-ribosylhomocysteine lyase.